The sequence spans 217 residues: Peroxiredoxin (217 aa).

Residues 2–159 (VVIGEKFPEV…IVRLVKALQT (158 aa)) form the Thioredoxin domain. Cys-46 serves as the catalytic Cysteine sulfenic acid (-SOH) intermediate. Arg-122 contributes to the substrate binding site.

The protein belongs to the peroxiredoxin family. Prx6 subfamily. In terms of assembly, homodecamer. Pentamer of dimers that assemble into a ring structure.

The protein resides in the cytoplasm. The catalysed reaction is a hydroperoxide + [thioredoxin]-dithiol = an alcohol + [thioredoxin]-disulfide + H2O. Thiol-specific peroxidase that catalyzes the reduction of hydrogen peroxide and organic hydroperoxides to water and alcohols, respectively. Plays a role in cell protection against oxidative stress by detoxifying peroxides. This Methanococcus maripaludis (strain DSM 14266 / JCM 13030 / NBRC 101832 / S2 / LL) protein is Peroxiredoxin.